A 500-amino-acid polypeptide reads, in one-letter code: NAD(P)H-quinone oxidoreductase chain 4, chloroplastic (500 aa).

15 helical membrane passes run Leu4–Phe24, Ile31–Phe51, Ile87–Val107, Pro111–Ser131, Ile134–Met154, Phe167–Leu187, Val207–Ile227, His242–Ile262, Ser274–Thr294, Ile305–Asp325, Gly330–Gly350, Thr358–Phe378, Leu386–Thr406, Ile416–Met436, and Ile462–Val482.

This sequence belongs to the complex I subunit 4 family.

It localises to the plastid. Its subcellular location is the chloroplast thylakoid membrane. The enzyme catalyses a plastoquinone + NADH + (n+1) H(+)(in) = a plastoquinol + NAD(+) + n H(+)(out). It carries out the reaction a plastoquinone + NADPH + (n+1) H(+)(in) = a plastoquinol + NADP(+) + n H(+)(out). The protein is NAD(P)H-quinone oxidoreductase chain 4, chloroplastic of Cycas taitungensis (Prince sago).